The sequence spans 379 residues: Na(+)/H(+) antiporter NhaA (379 aa).

12 consecutive transmembrane segments (helical) span residues 14–34, 59–79, 95–115, 125–145, 154–174, 175–195, 200–220, 221–241, 261–281, 292–312, 328–348, and 359–379; these read AGGI…NTPL, LLMW…GMEV, VFPA…FLVF, GWAI…ALLG, IFLL…IALF, FSHD…AILI, LKIT…ASVL, KSGV…PLNG, FAIL…GMGM, IALG…FVAV, IFAV…LAGL, and VTAL…VLGY.

Belongs to the NhaA Na(+)/H(+) (TC 2.A.33) antiporter family.

The protein resides in the cell inner membrane. It carries out the reaction Na(+)(in) + 2 H(+)(out) = Na(+)(out) + 2 H(+)(in). Its function is as follows. Na(+)/H(+) antiporter that extrudes sodium in exchange for external protons. This chain is Na(+)/H(+) antiporter NhaA, found in Pasteurella multocida (strain Pm70).